We begin with the raw amino-acid sequence, 157 residues long: 2-C-methyl-D-erythritol 2,4-cyclodiphosphate synthase (157 aa).

A divalent metal cation-binding residues include aspartate 8 and histidine 10. Residues aspartate 8–histidine 10 and histidine 34–serine 35 contribute to the 4-CDP-2-C-methyl-D-erythritol 2-phosphate site. Residue histidine 42 participates in a divalent metal cation binding. 4-CDP-2-C-methyl-D-erythritol 2-phosphate is bound by residues aspartate 56–glycine 58, phenylalanine 61–aspartate 65, alanine 100–leucine 106, threonine 132–glutamate 135, phenylalanine 139, and arginine 142.

This sequence belongs to the IspF family. As to quaternary structure, homotrimer. The cofactor is a divalent metal cation.

It catalyses the reaction 4-CDP-2-C-methyl-D-erythritol 2-phosphate = 2-C-methyl-D-erythritol 2,4-cyclic diphosphate + CMP. It functions in the pathway isoprenoid biosynthesis; isopentenyl diphosphate biosynthesis via DXP pathway; isopentenyl diphosphate from 1-deoxy-D-xylulose 5-phosphate: step 4/6. In terms of biological role, involved in the biosynthesis of isopentenyl diphosphate (IPP) and dimethylallyl diphosphate (DMAPP), two major building blocks of isoprenoid compounds. Catalyzes the conversion of 4-diphosphocytidyl-2-C-methyl-D-erythritol 2-phosphate (CDP-ME2P) to 2-C-methyl-D-erythritol 2,4-cyclodiphosphate (ME-CPP) with a corresponding release of cytidine 5-monophosphate (CMP). The chain is 2-C-methyl-D-erythritol 2,4-cyclodiphosphate synthase from Erwinia tasmaniensis (strain DSM 17950 / CFBP 7177 / CIP 109463 / NCPPB 4357 / Et1/99).